The following is a 1372-amino-acid chain: DNA-directed RNA polymerase subunit beta (1372 aa).

Belongs to the RNA polymerase beta chain family. As to quaternary structure, the RNAP catalytic core consists of 2 alpha, 1 beta, 1 beta' and 1 omega subunit. When a sigma factor is associated with the core the holoenzyme is formed, which can initiate transcription.

It catalyses the reaction RNA(n) + a ribonucleoside 5'-triphosphate = RNA(n+1) + diphosphate. In terms of biological role, DNA-dependent RNA polymerase catalyzes the transcription of DNA into RNA using the four ribonucleoside triphosphates as substrates. This chain is DNA-directed RNA polymerase subunit beta, found in Nitratidesulfovibrio vulgaris (strain ATCC 29579 / DSM 644 / CCUG 34227 / NCIMB 8303 / VKM B-1760 / Hildenborough) (Desulfovibrio vulgaris).